The sequence spans 141 residues: uncharacterized protein (141 aa).

This is an uncharacterized protein from Clostridium pasteurianum.